Here is a 715-residue protein sequence, read N- to C-terminus: Polyribonucleotide nucleotidyltransferase (715 aa).

Asp-495 and Asp-501 together coordinate Mg(2+). A KH domain is found at Pro-562–Ile-621. The S1 motif domain occupies Gly-631–Leu-699.

The protein belongs to the polyribonucleotide nucleotidyltransferase family. Mg(2+) is required as a cofactor.

The protein localises to the cytoplasm. It catalyses the reaction RNA(n+1) + phosphate = RNA(n) + a ribonucleoside 5'-diphosphate. Involved in mRNA degradation. Catalyzes the phosphorolysis of single-stranded polyribonucleotides processively in the 3'- to 5'-direction. The sequence is that of Polyribonucleotide nucleotidyltransferase from Thermosynechococcus vestitus (strain NIES-2133 / IAM M-273 / BP-1).